A 765-amino-acid polypeptide reads, in one-letter code: Probable dipeptidyl peptidase 4 (765 aa).

The N-terminal stretch at 1–14 (MKWSILLLVGCAAA) is a signal peptide. Residues asparagine 35, asparagine 78, asparagine 101, asparagine 110, asparagine 169, asparagine 218, asparagine 465, and asparagine 490 are each glycosylated (N-linked (GlcNAc...) asparagine). The active-site Charge relay system is serine 613. Asparagine 665 carries N-linked (GlcNAc...) asparagine glycosylation. Active-site charge relay system residues include aspartate 690 and histidine 725.

The protein belongs to the peptidase S9B family.

The protein resides in the secreted. The catalysed reaction is Release of an N-terminal dipeptide, Xaa-Yaa-|-Zaa-, from a polypeptide, preferentially when Yaa is Pro, provided Zaa is neither Pro nor hydroxyproline.. Extracellular dipeptidyl-peptidase which removes N-terminal dipeptides sequentially from polypeptides having unsubstituted N-termini provided that the penultimate residue is proline. The sequence is that of Probable dipeptidyl peptidase 4 (dpp4) from Neosartorya fischeri (strain ATCC 1020 / DSM 3700 / CBS 544.65 / FGSC A1164 / JCM 1740 / NRRL 181 / WB 181) (Aspergillus fischerianus).